The chain runs to 387 residues: Sorting nexin-7 (387 aa).

The region spanning 30–151 (KDLFITVDEP…IFLTAQAWEL (122 aa)) is the PX domain. Residues arginine 73, glutamine 75, lysine 103, and arginine 117 each contribute to the a 1,2-diacyl-sn-glycero-3-phospho-(1D-myo-inositol-3-phosphate) site. The 210-residue stretch at 178–387 (GVKNRPEEFM…HLEEASEDKP (210 aa)) folds into the BAR domain.

It belongs to the sorting nexin family. As to quaternary structure, heterodimer; heterodimerizes with SNX4.

Its subcellular location is the early endosome membrane. In terms of biological role, involved in the regulation of endocytosis and in several stages of intracellular trafficking. Together with SNX4, involved in autophagosome assembly by regulating trafficking and recycling of phospholipid scramblase ATG9A. This is Sorting nexin-7 from Homo sapiens (Human).